Consider the following 100-residue polypeptide: NAD(P)H-quinone oxidoreductase subunit 4L, chloroplastic (100 aa).

3 helical membrane passes run 1 to 21, 29 to 49, and 63 to 83; these read MFGH…YGLI, ALMC…TFPN, and VFVI…VLAI.

The protein belongs to the complex I subunit 4L family. In terms of assembly, NDH is composed of at least 16 different subunits, 5 of which are encoded in the nucleus.

The protein resides in the plastid. Its subcellular location is the chloroplast thylakoid membrane. It carries out the reaction a plastoquinone + NADH + (n+1) H(+)(in) = a plastoquinol + NAD(+) + n H(+)(out). The enzyme catalyses a plastoquinone + NADPH + (n+1) H(+)(in) = a plastoquinol + NADP(+) + n H(+)(out). Its function is as follows. NDH shuttles electrons from NAD(P)H:plastoquinone, via FMN and iron-sulfur (Fe-S) centers, to quinones in the photosynthetic chain and possibly in a chloroplast respiratory chain. The immediate electron acceptor for the enzyme in this species is believed to be plastoquinone. Couples the redox reaction to proton translocation, and thus conserves the redox energy in a proton gradient. The chain is NAD(P)H-quinone oxidoreductase subunit 4L, chloroplastic from Huperzia lucidula (Shining clubmoss).